The following is a 427-amino-acid chain: Enolase (427 aa).

Residue Gln163 coordinates (2R)-2-phosphoglycerate. Residue Glu205 is the Proton donor of the active site. Mg(2+) contacts are provided by Asp242, Glu285, and Asp312. Residues Lys337, Arg366, Ser367, and Lys388 each coordinate (2R)-2-phosphoglycerate. Catalysis depends on Lys337, which acts as the Proton acceptor.

It belongs to the enolase family. It depends on Mg(2+) as a cofactor.

It is found in the cytoplasm. The protein resides in the secreted. Its subcellular location is the cell surface. It catalyses the reaction (2R)-2-phosphoglycerate = phosphoenolpyruvate + H2O. The protein operates within carbohydrate degradation; glycolysis; pyruvate from D-glyceraldehyde 3-phosphate: step 4/5. In terms of biological role, catalyzes the reversible conversion of 2-phosphoglycerate (2-PG) into phosphoenolpyruvate (PEP). It is essential for the degradation of carbohydrates via glycolysis. This is Enolase from Albidiferax ferrireducens (strain ATCC BAA-621 / DSM 15236 / T118) (Rhodoferax ferrireducens).